The following is a 408-amino-acid chain: Chaperonin GroEL (408 aa).

ATP-binding positions include 30–33, lysine 51, and 87–91; these read TLGP and DGTTT.

Belongs to the chaperonin (HSP60) family. As to quaternary structure, forms a cylinder of 14 subunits composed of two heptameric rings stacked back-to-back. Interacts with the co-chaperonin GroES.

The protein localises to the cytoplasm. The catalysed reaction is ATP + H2O + a folded polypeptide = ADP + phosphate + an unfolded polypeptide.. In terms of biological role, together with its co-chaperonin GroES, plays an essential role in assisting protein folding. The GroEL-GroES system forms a nano-cage that allows encapsulation of the non-native substrate proteins and provides a physical environment optimized to promote and accelerate protein folding. This chain is Chaperonin GroEL, found in Rickettsia rickettsii.